Here is a 535-residue protein sequence, read N- to C-terminus: MGCNQSKSANDVRGNKVNNVNSKKKNNKREDINDGEEIAINPGMYVRKKEGKIGESYFKVRKLGSGAYGEVLLCKEKNGHSEKAIKVIKKSQFDKGRYNDDNKNIEKFHEEIYNEISLLKSLDHPNIIKLFDVFEDKKYFYLVTEFYEGGELFEQIINRHKFDECDAANIMKQILSGICYLHKHNIVHRDIKPENILLENKNSLLNIKIVDFGLSSFFSKDYKLRDRLGTAYYIAPEVLKKKYNEKCDVWSCGVIMYILLCGYPPFGGQNDQDIIKKVEKGKYYFDFNDWKNISDEAKELIKLMLTYDYNKRCTAEEALNSRWIKKYANNINKSDQKTLCGALSNMRKFEGSQKLAQAAILFIGSKLTTLEERKELTDIFKKLDKNGDGQLDKKELIEGYNVLRNFKNELGELKNVEEEVDNILKEVDFDKNGYIEYSEFISVCMDKQILFSEERLRRAFNLFDTDKSGKITKEELANVIIRGFYFFTYSLFGLTSVSEKTWNDVLGEADQNKDNMIDFDEFVSMMHKICDNKPF.

The interval 1–34 is disordered; it reads MGCNQSKSANDVRGNKVNNVNSKKKNNKREDIND. The N-myristoyl glycine moiety is linked to residue glycine 2. Residue cysteine 3 is the site of S-palmitoyl cysteine attachment. A Protein kinase domain is found at 57 to 324; that stretch reads YFKVRKLGSG…AEEALNSRWI (268 aa). ATP is bound by residues 63–71 and lysine 86; that span reads LGSGAYGEV. Serine 65 is modified (phosphoserine). Serine 117 is modified (phosphoserine). The Proton acceptor role is filled by aspartate 190. A phosphoserine mark is found at serine 216 and serine 219. The residue at position 230 (threonine 230) is a Phosphothreonine. At serine 334 the chain carries Phosphoserine. A J domain autoinhibitory motif motif is present at residues 345–352; it reads NMRKFEGS. The j domain stretch occupies residues 345–363; it reads NMRKFEGSQKLAQAAILFI. Residues 353–363 carry the J domain interacts with the EF-hand domains motif; it reads QKLAQAAILFI. EF-hand domains are found at residues 371–406, 415–450, 451–486, and 497–532; these read EERK…LRNF, NVEE…KQIL, FSEE…GFYF, and VSEK…ICDN. Aspartate 384, asparagine 386, aspartate 388, glutamine 390, glutamate 395, aspartate 428, aspartate 430, asparagine 432, tyrosine 434, glutamate 439, aspartate 464, aspartate 466, serine 468, lysine 470, glutamate 475, aspartate 510, asparagine 512, aspartate 514, methionine 516, and glutamate 521 together coordinate Ca(2+).

Belongs to the protein kinase superfamily. Ser/Thr protein kinase family. CDPK subfamily. In terms of assembly, monomer. Mg(2+) is required as a cofactor. Post-translationally, myristoylated. Myristoylation and palmitoylation are required for the localization to the parasitophorous vacuole membrane. In terms of processing, palmitoylated. Palmitoylation increases in merozoites in response to low level of extracellular K(+) in the host blood. Myristoylation and palmitoylation are required for the localization to the parasitophorous vacuole membrane. Phosphorylation at Thr-230 may regulate CDPK1 kinase activity. Phosphorylation increases in response to an increase in intracellular Ca(2+) levels. Autophosphorylated in vitro. Autophosphorylation does not affect membrane localization in vitro.

The protein resides in the membrane. It is found in the cell membrane. Its subcellular location is the parasitophorous vacuole membrane. The protein localises to the cytoplasm. It localises to the cell projection. The protein resides in the cilium. It is found in the flagellum. Its subcellular location is the host cell membrane. It catalyses the reaction L-seryl-[protein] + ATP = O-phospho-L-seryl-[protein] + ADP + H(+). It carries out the reaction L-threonyl-[protein] + ATP = O-phospho-L-threonyl-[protein] + ADP + H(+). Activated by calcium. Upon calcium binding to the EF-hand domains, the C-terminus of the junction domain (J domain) undergoes a conformational change which results in the dissociation of the pseudo-substrate inhibitory motif from the catalytic domain. This, in turn may facilitate the autophosphorylation of the activation loop at Thr-230, which leads to the kinase activation. Its function is as follows. Calcium-dependent protein kinase which acts as a sensor and effector of intracellular Ca(2+) levels probably in part downstream of cGMP-activated PKG kinase. During the liver stage, involved in sporozoite motility and thus in sporozoite invasion of host hepatocytes, probably together with CDPK4 and CDPK5. In the mosquito midgut and during the last stage of male gamete exflagellation, may play a role in the rupture of the host erythrocyte membrane. In the mosquito midgut, required for the differentiation of the zygote into the ookinete by promoting the translational activation of a subset of repressed mRNAs; these mRNAs are kept repressed in the zygote by the DOZI- or CITH-containing mRNP complexes. Dispensable during the asexual blood stage. In Plasmodium yoelii yoelii, this protein is Calcium-dependent protein kinase 1.